The sequence spans 383 residues: Succinyl-diaminopimelate desuccinylase (383 aa).

Histidine 73 contacts Zn(2+). Aspartate 75 is an active-site residue. Aspartate 107 is a binding site for Zn(2+). Residue glutamate 141 is the Proton acceptor of the active site. Zn(2+) contacts are provided by glutamate 142, glutamate 170, and histidine 356.

It belongs to the peptidase M20A family. DapE subfamily. As to quaternary structure, homodimer. Zn(2+) is required as a cofactor. Co(2+) serves as cofactor.

The catalysed reaction is N-succinyl-(2S,6S)-2,6-diaminopimelate + H2O = (2S,6S)-2,6-diaminopimelate + succinate. It participates in amino-acid biosynthesis; L-lysine biosynthesis via DAP pathway; LL-2,6-diaminopimelate from (S)-tetrahydrodipicolinate (succinylase route): step 3/3. Catalyzes the hydrolysis of N-succinyl-L,L-diaminopimelic acid (SDAP), forming succinate and LL-2,6-diaminopimelate (DAP), an intermediate involved in the bacterial biosynthesis of lysine and meso-diaminopimelic acid, an essential component of bacterial cell walls. This chain is Succinyl-diaminopimelate desuccinylase, found in Pseudomonas fluorescens (strain Pf0-1).